A 393-amino-acid polypeptide reads, in one-letter code: Thermostable carboxypeptidase 2 (393 aa).

Zn(2+) is bound by residues H104, D109, and H245. Y302 (proton donor) is an active-site residue. Residue E373 is the Nucleophile of the active site.

The protein belongs to the peptidase M20 family. In terms of assembly, homotetramer. The cofactor is Zn(2+).

In terms of biological role, can release basic, acidic, aromatic, and, to a lesser extent, aliphatic amino acids. The chain is Thermostable carboxypeptidase 2 (cpsA2) from Saccharolobus solfataricus (strain ATCC 35092 / DSM 1617 / JCM 11322 / P2) (Sulfolobus solfataricus).